A 274-amino-acid polypeptide reads, in one-letter code: Thymidylate synthase (274 aa).

A dUMP-binding site is contributed by R21. H51 lines the (6R)-5,10-methylene-5,6,7,8-tetrahydrofolate pocket. A dUMP-binding site is contributed by 123–124 (RR). C156 serves as the catalytic Nucleophile. DUMP is bound by residues 176–179 (RSAD), N187, and 217–219 (HIY). D179 is a binding site for (6R)-5,10-methylene-5,6,7,8-tetrahydrofolate. S273 serves as a coordination point for (6R)-5,10-methylene-5,6,7,8-tetrahydrofolate.

It belongs to the thymidylate synthase family. Bacterial-type ThyA subfamily. As to quaternary structure, homodimer.

The protein localises to the cytoplasm. The catalysed reaction is dUMP + (6R)-5,10-methylene-5,6,7,8-tetrahydrofolate = 7,8-dihydrofolate + dTMP. Its pathway is pyrimidine metabolism; dTTP biosynthesis. In terms of biological role, catalyzes the reductive methylation of 2'-deoxyuridine-5'-monophosphate (dUMP) to 2'-deoxythymidine-5'-monophosphate (dTMP) while utilizing 5,10-methylenetetrahydrofolate (mTHF) as the methyl donor and reductant in the reaction, yielding dihydrofolate (DHF) as a by-product. This enzymatic reaction provides an intracellular de novo source of dTMP, an essential precursor for DNA biosynthesis. The sequence is that of Thymidylate synthase from Francisella philomiragia subsp. philomiragia (strain ATCC 25017 / CCUG 19701 / FSC 153 / O#319-036).